Reading from the N-terminus, the 660-residue chain is Acetyl-coenzyme A synthetase (660 aa).

CoA is bound by residues 197–200 (RGGK) and Thr317. Residues 397–399 (GEP), 421–426 (DTWWQT), Asp512, and Arg528 contribute to the ATP site. Ser536 is a CoA binding site. ATP is bound at residue Arg539. Val550, His552, and Val555 together coordinate Mg(2+). Residue Lys625 is modified to N6-acetyllysine.

Belongs to the ATP-dependent AMP-binding enzyme family. Requires Mg(2+) as cofactor. In terms of processing, acetylated. Deacetylation by the SIR2-homolog deacetylase activates the enzyme.

The enzyme catalyses acetate + ATP + CoA = acetyl-CoA + AMP + diphosphate. Functionally, catalyzes the conversion of acetate into acetyl-CoA (AcCoA), an essential intermediate at the junction of anabolic and catabolic pathways. AcsA undergoes a two-step reaction. In the first half reaction, AcsA combines acetate with ATP to form acetyl-adenylate (AcAMP) intermediate. In the second half reaction, it can then transfer the acetyl group from AcAMP to the sulfhydryl group of CoA, forming the product AcCoA. This Burkholderia lata (strain ATCC 17760 / DSM 23089 / LMG 22485 / NCIMB 9086 / R18194 / 383) protein is Acetyl-coenzyme A synthetase.